We begin with the raw amino-acid sequence, 202 residues long: 3-isopropylmalate dehydratase small subunit (202 aa).

This sequence belongs to the LeuD family. LeuD type 1 subfamily. In terms of assembly, heterodimer of LeuC and LeuD.

The enzyme catalyses (2R,3S)-3-isopropylmalate = (2S)-2-isopropylmalate. It functions in the pathway amino-acid biosynthesis; L-leucine biosynthesis; L-leucine from 3-methyl-2-oxobutanoate: step 2/4. Its function is as follows. Catalyzes the isomerization between 2-isopropylmalate and 3-isopropylmalate, via the formation of 2-isopropylmaleate. This is 3-isopropylmalate dehydratase small subunit from Novosphingobium aromaticivorans (strain ATCC 700278 / DSM 12444 / CCUG 56034 / CIP 105152 / NBRC 16084 / F199).